We begin with the raw amino-acid sequence, 337 residues long: Secreted effector protein EspF(U) (337 aa).

Repeat copies occupy residues 96–142, 143–189, 190–236, 237–283, and 284–330. The segment at 96 to 330 is 5 X 48 AA approximate tandem repeats; the sequence is IKPARSMAEH…RLMQHLAEHG (235 aa). Positions 291–312 are disordered; sequence AEHIPPAPNWPAPTPPVQNEQS. Pro residues predominate over residues 295–306; the sequence is PPAPNWPAPTPP.

The protein belongs to the EspF(U)/TccP family. Interacts with host BAIAP2 and host WASL/N-WASP. Can also interact with host proteins BAIAP2L1 and WAS/WASP.

Its subcellular location is the secreted. It is found in the host cytoplasm. Functionally, required for efficient pedestal formation in host epithelial cells during infection. Acts as an intermediate between Tir (via host BAIAP2) and host WASL/N-WASP. Directly binds and activates WASL/N-WASP, which stimulates actin polymerization and leads to the formation of actin pedestals at the sites of bacterial adhesion. In Escherichia coli O157:H7, this protein is Secreted effector protein EspF(U) (espF(U)).